A 376-amino-acid polypeptide reads, in one-letter code: Succinyl-diaminopimelate desuccinylase (376 aa).

Residue histidine 67 participates in Zn(2+) binding. Aspartate 69 is a catalytic residue. Aspartate 100 is a binding site for Zn(2+). The active-site Proton acceptor is glutamate 134. The Zn(2+) site is built by glutamate 135, glutamate 163, and histidine 349.

The protein belongs to the peptidase M20A family. DapE subfamily. Homodimer. Requires Zn(2+) as cofactor. Co(2+) serves as cofactor.

The enzyme catalyses N-succinyl-(2S,6S)-2,6-diaminopimelate + H2O = (2S,6S)-2,6-diaminopimelate + succinate. The protein operates within amino-acid biosynthesis; L-lysine biosynthesis via DAP pathway; LL-2,6-diaminopimelate from (S)-tetrahydrodipicolinate (succinylase route): step 3/3. Catalyzes the hydrolysis of N-succinyl-L,L-diaminopimelic acid (SDAP), forming succinate and LL-2,6-diaminopimelate (DAP), an intermediate involved in the bacterial biosynthesis of lysine and meso-diaminopimelic acid, an essential component of bacterial cell walls. The sequence is that of Succinyl-diaminopimelate desuccinylase from Idiomarina loihiensis (strain ATCC BAA-735 / DSM 15497 / L2-TR).